Consider the following 248-residue polypeptide: 3-deoxy-manno-octulosonate cytidylyltransferase (248 aa).

The protein belongs to the KdsB family.

The protein resides in the cytoplasm. The enzyme catalyses 3-deoxy-alpha-D-manno-oct-2-ulosonate + CTP = CMP-3-deoxy-beta-D-manno-octulosonate + diphosphate. It functions in the pathway nucleotide-sugar biosynthesis; CMP-3-deoxy-D-manno-octulosonate biosynthesis; CMP-3-deoxy-D-manno-octulosonate from 3-deoxy-D-manno-octulosonate and CTP: step 1/1. It participates in bacterial outer membrane biogenesis; lipopolysaccharide biosynthesis. In terms of biological role, activates KDO (a required 8-carbon sugar) for incorporation into bacterial lipopolysaccharide in Gram-negative bacteria. This Shigella flexneri protein is 3-deoxy-manno-octulosonate cytidylyltransferase.